Here is a 335-residue protein sequence, read N- to C-terminus: Acetyl-coenzyme A carboxylase carboxyl transferase subunit alpha (335 aa).

Positions 40–294 (QLETLATRRR…KEAIEKHLDT (255 aa)) constitute a CoA carboxyltransferase C-terminal domain.

The protein belongs to the AccA family. As to quaternary structure, acetyl-CoA carboxylase is a heterohexamer composed of biotin carboxyl carrier protein (AccB), biotin carboxylase (AccC) and two subunits each of ACCase subunit alpha (AccA) and ACCase subunit beta (AccD).

The protein localises to the cytoplasm. The catalysed reaction is N(6)-carboxybiotinyl-L-lysyl-[protein] + acetyl-CoA = N(6)-biotinyl-L-lysyl-[protein] + malonyl-CoA. It participates in lipid metabolism; malonyl-CoA biosynthesis; malonyl-CoA from acetyl-CoA: step 1/1. Component of the acetyl coenzyme A carboxylase (ACC) complex. First, biotin carboxylase catalyzes the carboxylation of biotin on its carrier protein (BCCP) and then the CO(2) group is transferred by the carboxyltransferase to acetyl-CoA to form malonyl-CoA. The protein is Acetyl-coenzyme A carboxylase carboxyl transferase subunit alpha of Prochlorococcus marinus (strain MIT 9312).